The primary structure comprises 557 residues: Urocanate hydratase (557 aa).

Residues 52-53, Gln-130, 176-178, Glu-196, Arg-201, 242-243, 263-267, 273-274, and Tyr-322 each bind NAD(+); these read GG, GMG, NA, QTSAH, and YL. The active site involves Cys-410. Gly-492 serves as a coordination point for NAD(+).

It belongs to the urocanase family. NAD(+) is required as a cofactor.

It localises to the cytoplasm. It catalyses the reaction 4-imidazolone-5-propanoate = trans-urocanate + H2O. The protein operates within amino-acid degradation; L-histidine degradation into L-glutamate; N-formimidoyl-L-glutamate from L-histidine: step 2/3. Its function is as follows. Catalyzes the conversion of urocanate to 4-imidazolone-5-propionate. The sequence is that of Urocanate hydratase from Allorhizobium ampelinum (strain ATCC BAA-846 / DSM 112012 / S4) (Agrobacterium vitis (strain S4)).